A 271-amino-acid polypeptide reads, in one-letter code: ATP synthase subunit delta (271 aa).

Belongs to the ATPase delta chain family. In terms of assembly, F-type ATPases have 2 components, F(1) - the catalytic core - and F(0) - the membrane proton channel. F(1) has five subunits: alpha(3), beta(3), gamma(1), delta(1), epsilon(1). F(0) has three main subunits: a(1), b(2) and c(10-14). The alpha and beta chains form an alternating ring which encloses part of the gamma chain. F(1) is attached to F(0) by a central stalk formed by the gamma and epsilon chains, while a peripheral stalk is formed by the delta and b chains.

Its subcellular location is the cell membrane. In terms of biological role, f(1)F(0) ATP synthase produces ATP from ADP in the presence of a proton or sodium gradient. F-type ATPases consist of two structural domains, F(1) containing the extramembraneous catalytic core and F(0) containing the membrane proton channel, linked together by a central stalk and a peripheral stalk. During catalysis, ATP synthesis in the catalytic domain of F(1) is coupled via a rotary mechanism of the central stalk subunits to proton translocation. This protein is part of the stalk that links CF(0) to CF(1). It either transmits conformational changes from CF(0) to CF(1) or is implicated in proton conduction. This Corynebacterium kroppenstedtii (strain DSM 44385 / JCM 11950 / CIP 105744 / CCUG 35717) protein is ATP synthase subunit delta.